Reading from the N-terminus, the 128-residue chain is Small ribosomal subunit protein uS11 (128 aa).

The protein belongs to the universal ribosomal protein uS11 family. Part of the 30S ribosomal subunit. Interacts with proteins S7 and S18. Binds to IF-3.

Located on the platform of the 30S subunit, it bridges several disparate RNA helices of the 16S rRNA. Forms part of the Shine-Dalgarno cleft in the 70S ribosome. The chain is Small ribosomal subunit protein uS11 from Solidesulfovibrio magneticus (strain ATCC 700980 / DSM 13731 / RS-1) (Desulfovibrio magneticus).